Consider the following 335-residue polypeptide: Ornithine carbamoyltransferase, catabolic (335 aa).

Carbamoyl phosphate contacts are provided by residues S59 to T62, Q86, R110, and H137 to Q140. L-ornithine-binding positions include N169, D233, and S237–M238. Residues C274–L275 and R319 each bind carbamoyl phosphate.

The protein belongs to the aspartate/ornithine carbamoyltransferase superfamily. OTCase family.

The protein resides in the cytoplasm. The catalysed reaction is carbamoyl phosphate + L-ornithine = L-citrulline + phosphate + H(+). The protein operates within amino-acid degradation; L-arginine degradation via ADI pathway; carbamoyl phosphate from L-arginine: step 2/2. Functionally, reversibly catalyzes the transfer of the carbamoyl group from carbamoyl phosphate (CP) to the N(epsilon) atom of ornithine (ORN) to produce L-citrulline. This is Ornithine carbamoyltransferase, catabolic (arcB) from Bacillus licheniformis (strain ATCC 14580 / DSM 13 / JCM 2505 / CCUG 7422 / NBRC 12200 / NCIMB 9375 / NCTC 10341 / NRRL NRS-1264 / Gibson 46).